The primary structure comprises 199 residues: NAD(P)H dehydrogenase (quinone) (199 aa).

Positions V4 to V190 constitute a Flavodoxin-like domain. FMN-binding positions include S10–I15 and T79–F81. Residue Y12 participates in NAD(+) binding. Position 99 (W99) interacts with substrate. An FMN-binding site is contributed by H134.

Belongs to the WrbA family. FMN is required as a cofactor.

The enzyme catalyses a quinone + NADH + H(+) = a quinol + NAD(+). The catalysed reaction is a quinone + NADPH + H(+) = a quinol + NADP(+). The protein is NAD(P)H dehydrogenase (quinone) of Tolumonas auensis (strain DSM 9187 / NBRC 110442 / TA 4).